The chain runs to 863 residues: DNA ligase (863 aa).

NAD(+) contacts are provided by residues 76 to 80 (DAAYD), 125 to 126 (SL), and Glu-159. The active-site N6-AMP-lysine intermediate is the Lys-161. NAD(+) is bound by residues Arg-182 and Glu-221. Residues 237–256 (EDAGRPPFANPRNAAAGSLR) are disordered. Residues 241–253 (RPPFANPRNAAAG) are compositionally biased toward low complexity. Lys-346 and Lys-370 together coordinate NAD(+). Positions 467, 470, 486, and 492 each coordinate Zn(2+). The 83-residue stretch at 781–863 (GLPQTLEGKS…DTLLATGDVQ (83 aa)) folds into the BRCT domain.

This sequence belongs to the NAD-dependent DNA ligase family. LigA subfamily. Requires Mg(2+) as cofactor. It depends on Mn(2+) as a cofactor.

It catalyses the reaction NAD(+) + (deoxyribonucleotide)n-3'-hydroxyl + 5'-phospho-(deoxyribonucleotide)m = (deoxyribonucleotide)n+m + AMP + beta-nicotinamide D-nucleotide.. DNA ligase that catalyzes the formation of phosphodiester linkages between 5'-phosphoryl and 3'-hydroxyl groups in double-stranded DNA using NAD as a coenzyme and as the energy source for the reaction. It is essential for DNA replication and repair of damaged DNA. In Bifidobacterium animalis subsp. lactis (strain AD011), this protein is DNA ligase.